Here is a 196-residue protein sequence, read N- to C-terminus: Ribosome maturation factor RimP (196 aa).

The protein belongs to the RimP family.

Its subcellular location is the cytoplasm. Its function is as follows. Required for maturation of 30S ribosomal subunits. The chain is Ribosome maturation factor RimP from Dinoroseobacter shibae (strain DSM 16493 / NCIMB 14021 / DFL 12).